Consider the following 68-residue polypeptide: Protein SlyX homolog (68 aa).

It belongs to the SlyX family.

This chain is Protein SlyX homolog, found in Pseudomonas entomophila (strain L48).